Reading from the N-terminus, the 403-residue chain is Eukaryotic initiation factor 4A (403 aa).

Positions 1-20 (MDDRNEIPQDGPASMEPEGV) are disordered. A Q motif motif is present at residues 30–58 (DNFDDMNLREELLRGIYGYGFEKPSAIQQ). The Helicase ATP-binding domain occupies 61 to 231 (IIPCVRGRDV…RCFMRDPVSI (171 aa)). An ATP-binding site is contributed by 74 to 81 (AQSGTGKT). Positions 179–182 (DEAD) match the DEAD box motif. The Helicase C-terminal domain occupies 242 to 403 (GIKQFYVNVK…EMPANIADLI (162 aa)).

Belongs to the DEAD box helicase family. eIF4A subfamily. In terms of assembly, eIF4F is a multi-subunit complex, the composition of which varies with external and internal environmental conditions. It is composed of at least eIF4A, eIF4E1 and eIF4G1. Interacts with tud and vas. Interacts (via multiple contacts) with bam; the interaction is direct.

The protein localises to the cytoplasm. It localises to the cytoplasmic ribonucleoprotein granule. The catalysed reaction is ATP + H2O = ADP + phosphate + H(+). ATP-dependent RNA helicase which is a subunit of the eIF4F complex involved in cap recognition and is required for mRNA binding to ribosome. In the current model of translation initiation, eIF4A unwinds RNA secondary structures in the 5'-UTR of mRNAs which is necessary to allow efficient binding of the small ribosomal subunit, and subsequent scanning for the initiator codon. As a result, promotes cell proliferation and growth. Binds and antagonises the bam-bgcn complex; probably prevents bam mediated translational repression of shg/E-cadherin. Involved in germ cell formation. Involved in germline stem cell maintenance and proliferation; prevents differentiation. This is Eukaryotic initiation factor 4A from Drosophila melanogaster (Fruit fly).